We begin with the raw amino-acid sequence, 467 residues long: Acetaldehyde dehydrogenase (acetylating) EutE (467 aa).

The segment at 1 to 19 (MNQQDIEQVVKAVLLKMKD) is targets protein to the BMC.

It belongs to the EutE/PduP family. As to quaternary structure, interacts with EutS, which targets it to the interior of the BMC.

The protein localises to the bacterial microcompartment. The catalysed reaction is acetaldehyde + NAD(+) + CoA = acetyl-CoA + NADH + H(+). It participates in amine and polyamine degradation; ethanolamine degradation. Its function is as follows. Acts as the second step in ethanolamine degradation by converting acetaldehyde into acetyl-CoA. Has a very strong preference for NAD(+) over NADP(+) in both catalytic directions. May play a role in bacterial microcompartment (BMC) assembly or maintenance. Directly targeted to the BMC. In terms of biological role, expression of the eut operon allows this bacteria to use ethanolamine (EA) as a carbon, nitrogen and energy source. It relies on cobalamin (vitamin B12) both as a cofactor for the ethanolamine ammonia-lyase (EAL) activity and to induce the operon. EA enhances bacterial survival in macrophages in a concentration-dependent manner, suggesting it is an important nutrient during infection. This chain is Acetaldehyde dehydrogenase (acetylating) EutE, found in Salmonella typhimurium (strain LT2 / SGSC1412 / ATCC 700720).